Consider the following 705-residue polypeptide: Polyribonucleotide nucleotidyltransferase (705 aa).

Mg(2+)-binding residues include aspartate 486 and aspartate 492. In terms of domain architecture, KH spans 553–612 (PRIIKFKINPEKIRDVIGKGGAVIRALTEETGTTIDISDDGSVTIASISNEGGEQAKRRI). Residues 622–690 (GKIYEGTVLK…DKGRLRLSMK (69 aa)) form the S1 motif domain.

The protein belongs to the polyribonucleotide nucleotidyltransferase family. It depends on Mg(2+) as a cofactor.

The protein localises to the cytoplasm. It catalyses the reaction RNA(n+1) + phosphate = RNA(n) + a ribonucleoside 5'-diphosphate. Involved in mRNA degradation. Catalyzes the phosphorolysis of single-stranded polyribonucleotides processively in the 3'- to 5'-direction. The polypeptide is Polyribonucleotide nucleotidyltransferase (Nitrosomonas eutropha (strain DSM 101675 / C91 / Nm57)).